The primary structure comprises 233 residues: 2,3,4,5-tetrahydropyridine-2,6-dicarboxylate N-acetyltransferase (233 aa).

This sequence belongs to the transferase hexapeptide repeat family. DapH subfamily.

It carries out the reaction (S)-2,3,4,5-tetrahydrodipicolinate + acetyl-CoA + H2O = L-2-acetamido-6-oxoheptanedioate + CoA. The protein operates within amino-acid biosynthesis; L-lysine biosynthesis via DAP pathway; LL-2,6-diaminopimelate from (S)-tetrahydrodipicolinate (acetylase route): step 1/3. Catalyzes the transfer of an acetyl group from acetyl-CoA to tetrahydrodipicolinate. In Thermotoga sp. (strain RQ2), this protein is 2,3,4,5-tetrahydropyridine-2,6-dicarboxylate N-acetyltransferase.